The following is a 59-amino-acid chain: Lantibiotic lacticin 3147 A1 (59 aa).

A propeptide spanning residues 1-29 is cleaved from the precursor; it reads MNKNEIETQPVTWLEEVSDQNFDEDVFGA. Positions 30–31 form a cross-link, lanthionine (Cys-Ser); sequence CS. Thr32 and Thr34 each carry 2,3-didehydrobutyrine. Residue Ser36 is modified to 2,3-didehydroalanine (Ser). Residues 38–48 constitute a cross-link (lanthionine (Ser-Cys)); it reads SDYWGNNGAWC. 2 consecutive cross-links (beta-methyllanthionine (Thr-Cys)) follow at residues 49–54 and 51–58; these read TLTHEC and THECMAWC.

In terms of processing, maturation of lantibiotics involves the enzymatic conversion of Thr, and Ser into dehydrated AA and the formation of thioether bonds with cysteine. This is followed by membrane translocation and cleavage of the modified precursor. Post-translationally, it is not established whether the 2,3-didehydrobutyrines are the E- or Z-isomers. In the NMR model they were assumed to be the Z-isomer.

The protein resides in the secreted. In terms of biological role, lanthionine-containing peptide antibiotic (lantibiotic) active on Gram-positive bacteria. The bactericidal activity of lantibiotics is based on depolarization of energized bacterial cytoplasmic membranes, initiated by the formation of aqueous transmembrane pores. When present individually lacticin 3147 A1 exhibits strong activity towards L.lactis strain AM2, weak activity towards L.lactis strain HP and no activity towards L.lactis strain IFPL359, but when combined with lacticin 3147 A2 it displays strong activity towards all three strains. The protein is Lantibiotic lacticin 3147 A1 of Lactococcus lactis subsp. lactis (Streptococcus lactis).